The chain runs to 127 residues: Fluoride-specific ion channel FluC (127 aa).

Helical transmembrane passes span 7-27 (LLVA…GAWV), 31-51 (LGAG…FLIG), 68-88 (LFLA…SYET), and 97-117 (VGKA…LAFL). Na(+) contacts are provided by glycine 76 and threonine 79.

Belongs to the fluoride channel Fluc/FEX (TC 1.A.43) family.

The protein localises to the cell inner membrane. It catalyses the reaction fluoride(in) = fluoride(out). Its activity is regulated as follows. Na(+) is not transported, but it plays an essential structural role and its presence is essential for fluoride channel function. Its function is as follows. Fluoride-specific ion channel. Important for reducing fluoride concentration in the cell, thus reducing its toxicity. This is Fluoride-specific ion channel FluC from Thermus thermophilus (strain ATCC BAA-163 / DSM 7039 / HB27).